Here is a 238-residue protein sequence, read N- to C-terminus: NAD(P)H-quinone oxidoreductase subunit K 1 (238 aa).

4 residues coordinate [4Fe-4S] cluster: Cys-54, Cys-55, Cys-119, and Cys-150.

It belongs to the complex I 20 kDa subunit family. NDH-1 can be composed of about 15 different subunits; different subcomplexes with different compositions have been identified which probably have different functions. [4Fe-4S] cluster serves as cofactor.

It is found in the cellular thylakoid membrane. It carries out the reaction a plastoquinone + NADH + (n+1) H(+)(in) = a plastoquinol + NAD(+) + n H(+)(out). It catalyses the reaction a plastoquinone + NADPH + (n+1) H(+)(in) = a plastoquinol + NADP(+) + n H(+)(out). Its function is as follows. NDH-1 shuttles electrons from an unknown electron donor, via FMN and iron-sulfur (Fe-S) centers, to quinones in the respiratory and/or the photosynthetic chain. The immediate electron acceptor for the enzyme in this species is believed to be plastoquinone. Couples the redox reaction to proton translocation, and thus conserves the redox energy in a proton gradient. Cyanobacterial NDH-1 also plays a role in inorganic carbon-concentration. This Cyanothece sp. (strain PCC 7425 / ATCC 29141) protein is NAD(P)H-quinone oxidoreductase subunit K 1.